Consider the following 208-residue polypeptide: MTKPYVRLDKNDAAVLLVDHQAGLLSLVRDIEPDKFKNNVLALGDLAKYFNLPTILTTSFETGPNGPLVPELKAQFPDTPYIARPGNINAWDNEDFVKAVKATGKKQLIIAGVVTEVCVAFPALSAIEEGFDVFVVTDASGTFNEITRHSAWDRLSQAGAQLMTWFGVACELHRDWRNDIEGLATLFSNHIPDYRNLMTSYDTLTKQK.

Cysteine 118 is a catalytic residue.

Homooctamer composed of two tetrameric rings.

The polypeptide is Probable hydrolase YcaC (ycaC) (Escherichia coli (strain K12)).